The chain runs to 401 residues: MQKLTILGATGSIGASTLKVVEQNPELFSVVALAAGTNVEKMVALCRQWQPKFAVMADKAAAVALQSEIHTISPNTEVLGGVDALCHVASLEEVDSVMAAIVGAAGLLPTMAAVKAGKRVLLANKEALVMSGQLFIDAVEQYGAELLPVDSEHNAIFQCLPQQVQTNLGRCNLDEHGISSILLTGSGGPFRYADIADLDSVTPAQAIAHPNWSMGPKISVDSATMMNKGLEYIEAKWLFNAARDQLKVIIHPQSVIHSMVQYRDGSVLAQMGEPDMATPIALTMSYPSRVDAGVKPLDFTQVGELTFLQPDFARYPCLKLAIDACYEGQHATTALNAANEVAVDAFLNNRLGFTDIARINELVLHKITASCKPENANSLESLLELDRMSRTIALEIIRERS.

Residues threonine 10, glycine 11, serine 12, isoleucine 13, glycine 36, asparagine 38, and asparagine 124 each coordinate NADPH. Lysine 125 is a binding site for 1-deoxy-D-xylulose 5-phosphate. NADPH is bound at residue glutamate 126. Aspartate 150 provides a ligand contact to Mn(2+). The 1-deoxy-D-xylulose 5-phosphate site is built by serine 151, glutamate 152, serine 186, and histidine 209. Glutamate 152 lines the Mn(2+) pocket. Residue glycine 215 participates in NADPH binding. 1-deoxy-D-xylulose 5-phosphate-binding residues include serine 222, asparagine 227, lysine 228, and glutamate 231. Glutamate 231 serves as a coordination point for Mn(2+).

It belongs to the DXR family. Mg(2+) is required as a cofactor. Requires Mn(2+) as cofactor.

The enzyme catalyses 2-C-methyl-D-erythritol 4-phosphate + NADP(+) = 1-deoxy-D-xylulose 5-phosphate + NADPH + H(+). It functions in the pathway isoprenoid biosynthesis; isopentenyl diphosphate biosynthesis via DXP pathway; isopentenyl diphosphate from 1-deoxy-D-xylulose 5-phosphate: step 1/6. Catalyzes the NADPH-dependent rearrangement and reduction of 1-deoxy-D-xylulose-5-phosphate (DXP) to 2-C-methyl-D-erythritol 4-phosphate (MEP). The protein is 1-deoxy-D-xylulose 5-phosphate reductoisomerase of Vibrio parahaemolyticus serotype O3:K6 (strain RIMD 2210633).